The following is a 199-amino-acid chain: Dephospho-CoA kinase (199 aa).

Positions Arg11–Leu199 constitute a DPCK domain. Position 19 to 24 (Ala19 to Ser24) interacts with ATP.

It belongs to the CoaE family.

It is found in the cytoplasm. It catalyses the reaction 3'-dephospho-CoA + ATP = ADP + CoA + H(+). The protein operates within cofactor biosynthesis; coenzyme A biosynthesis; CoA from (R)-pantothenate: step 5/5. Its function is as follows. Catalyzes the phosphorylation of the 3'-hydroxyl group of dephosphocoenzyme A to form coenzyme A. The protein is Dephospho-CoA kinase of Synechococcus sp. (strain CC9902).